The primary structure comprises 169 residues: Peptide deformylase (169 aa).

Fe cation-binding residues include Cys91 and His133. Residue Glu134 is part of the active site. His137 contributes to the Fe cation binding site.

The protein belongs to the polypeptide deformylase family. The cofactor is Fe(2+).

It carries out the reaction N-terminal N-formyl-L-methionyl-[peptide] + H2O = N-terminal L-methionyl-[peptide] + formate. In terms of biological role, removes the formyl group from the N-terminal Met of newly synthesized proteins. Requires at least a dipeptide for an efficient rate of reaction. N-terminal L-methionine is a prerequisite for activity but the enzyme has broad specificity at other positions. The protein is Peptide deformylase of Escherichia coli (strain SMS-3-5 / SECEC).